A 293-amino-acid chain; its full sequence is Elongation factor Ts (293 aa).

Residues 81–84 form an involved in Mg(2+) ion dislocation from EF-Tu region; that stretch reads TDFV.

It belongs to the EF-Ts family.

It is found in the cytoplasm. Its function is as follows. Associates with the EF-Tu.GDP complex and induces the exchange of GDP to GTP. It remains bound to the aminoacyl-tRNA.EF-Tu.GTP complex up to the GTP hydrolysis stage on the ribosome. In Thioalkalivibrio sulfidiphilus (strain HL-EbGR7), this protein is Elongation factor Ts.